Here is a 100-residue protein sequence, read N- to C-terminus: Urease subunit gamma (100 aa).

It belongs to the urease gamma subunit family. As to quaternary structure, heterotrimer of UreA (gamma), UreB (beta) and UreC (alpha) subunits. Three heterotrimers associate to form the active enzyme.

The protein localises to the cytoplasm. It carries out the reaction urea + 2 H2O + H(+) = hydrogencarbonate + 2 NH4(+). Its pathway is nitrogen metabolism; urea degradation; CO(2) and NH(3) from urea (urease route): step 1/1. The polypeptide is Urease subunit gamma (Micrococcus luteus (strain ATCC 4698 / DSM 20030 / JCM 1464 / CCM 169 / CCUG 5858 / IAM 1056 / NBRC 3333 / NCIMB 9278 / NCTC 2665 / VKM Ac-2230) (Micrococcus lysodeikticus)).